The primary structure comprises 102 residues: Small ribosomal subunit protein uS10 (102 aa).

It belongs to the universal ribosomal protein uS10 family. As to quaternary structure, part of the 30S ribosomal subunit.

In terms of biological role, involved in the binding of tRNA to the ribosomes. This is Small ribosomal subunit protein uS10 from Clostridium botulinum (strain ATCC 19397 / Type A).